A 22-amino-acid chain; its full sequence is Unknown protein from spot 168 of 2D-PAGE of etiolated coleoptile (22 aa).

The chain is Unknown protein from spot 168 of 2D-PAGE of etiolated coleoptile from Zea mays (Maize).